The following is a 361-amino-acid chain: Septin-2 (361 aa).

Tyrosine 17 carries the post-translational modification Phosphotyrosine. The Septin-type G domain occupies 34-306 (KGFEFTLMVV…ENFRSERLKR (273 aa)). Positions 44 to 51 (GESGLGKS) are G1 motif. GTP is bound by residues 44–51 (GESGLGKS), threonine 78, glycine 104, and 183–191 (KADTLTLKE). Residues 101 to 104 (DTPG) are G3 motif. Residues 182–185 (AKAD) form a G4 motif region. Position 190 is an N6-acetyllysine (lysine 190). At tyrosine 211 the chain carries Phosphotyrosine. Position 218 is a phosphoserine (serine 218). GTP contacts are provided by glycine 241 and arginine 256. The important for dimerization stretch occupies residues 260–270 (WGVVEVENPEH).

It belongs to the TRAFAC class TrmE-Era-EngA-EngB-Septin-like GTPase superfamily. Septin GTPase family. In terms of assembly, septins polymerize into heterooligomeric protein complexes that form filaments, and associate with cellular membranes, actin filaments and microtubules. GTPase activity is required for filament formation. Filaments are assembled from asymmetrical heterotrimers, composed of SEPTIN2, SEPTIN6 and SEPTIN7 that associate head-to-head to form a hexameric unit. Interaction between SEPTIN2 and SEPTIN7 seems indirect. Interacts with SEPTIN5. Interaction with SEPTIN4 not detected. Interacts with SEPTIN9. Component of a septin core octameric complex consisting of SEPTIN12, SEPTIN7, SEPTIN6 and SEPTIN2 or SEPTIN4 in the order 12-7-6-2-2-6-7-12 or 12-7-6-4-4-6-7-12 and located in the sperm annulus. Interacts with MAP4. Interacts with DZIP1L.

The protein resides in the cytoplasm. Its subcellular location is the cytoskeleton. It is found in the spindle. The protein localises to the chromosome. It localises to the centromere. The protein resides in the kinetochore. Its subcellular location is the cleavage furrow. It is found in the midbody. The protein localises to the cell cortex. It localises to the cell projection. The protein resides in the cilium membrane. Its subcellular location is the cilium. It is found in the flagellum. Filament-forming cytoskeletal GTPase. Forms a filamentous structure with SEPTIN12, SEPTIN6, SEPTIN2 and probably SEPTIN4 at the sperm annulus which is required for the structural integrity and motility of the sperm tail during postmeiotic differentiation. Required for normal organization of the actin cytoskeleton. Plays a role in the biogenesis of polarized columnar-shaped epithelium by maintaining polyglutamylated microtubules, thus facilitating efficient vesicle transport, and by impeding MAP4 binding to tubulin. Required for the progression through mitosis. Forms a scaffold at the midplane of the mitotic splindle required to maintain CENPE localization at kinetochores and consequently chromosome congression. During anaphase, may be required for chromosome segregation and spindle elongation. Plays a role in ciliogenesis and collective cell movements. In cilia, required for the integrity of the diffusion barrier at the base of the primary cilium that prevents diffusion of transmembrane proteins between the cilia and plasma membranes: probably acts by regulating the assembly of the tectonic-like complex (also named B9 complex) by localizing TMEM231 protein. This is Septin-2 from Bos taurus (Bovine).